The primary structure comprises 245 residues: 8-amino-3,8-dideoxy-manno-octulosonate cytidylyltransferase (245 aa).

Belongs to the KdsB family.

It localises to the cytoplasm. It carries out the reaction 8-amino-3,8-dideoxy-alpha-D-manno-octulosonate + CTP = CMP-8-amino-3,8-dideoxy-alpha-D-manno-oct-2-ulosonate + diphosphate. The protein operates within bacterial outer membrane biogenesis; lipopolysaccharide biosynthesis. In terms of biological role, activates KDO8N (a required 8-carbon sugar) for incorporation into bacterial lipopolysaccharide in the Shewanella genus. This Shewanella baltica (strain OS195) protein is 8-amino-3,8-dideoxy-manno-octulosonate cytidylyltransferase.